A 504-amino-acid chain; its full sequence is L-carnitine/gamma-butyrobetaine antiporter (504 aa).

The next 12 membrane-spanning stretches (helical) occupy residues 10 to 30, 51 to 71, 92 to 112, 143 to 163, 195 to 215, 231 to 251, 263 to 283, 316 to 336, 347 to 367, 398 to 418, 446 to 466, and 475 to 495; these read IEPK…WLTV, WGWA…WLVF, IFMM…SIEI, GPLP…FFFV, FYLV…TPLV, LDAI…ACGL, SYLS…SFIM, WTVF…IFLA, LCFG…TVLG, WAAL…CFIA, LLVR…LLAL, and AIIA…LSFI.

It belongs to the BCCT transporter (TC 2.A.15) family. CaiT subfamily. In terms of assembly, homotrimer.

The protein localises to the cell inner membrane. It catalyses the reaction 4-(trimethylamino)butanoate(in) + (R)-carnitine(out) = 4-(trimethylamino)butanoate(out) + (R)-carnitine(in). The protein operates within amine and polyamine metabolism; carnitine metabolism. Its function is as follows. Catalyzes the exchange of L-carnitine for gamma-butyrobetaine. The sequence is that of L-carnitine/gamma-butyrobetaine antiporter from Escherichia coli O6:K15:H31 (strain 536 / UPEC).